The primary structure comprises 257 residues: tRNA (guanine-N(1)-)-methyltransferase (257 aa).

Residues glycine 117 and 137–142 (LGDFVL) contribute to the S-adenosyl-L-methionine site.

This sequence belongs to the RNA methyltransferase TrmD family. As to quaternary structure, homodimer.

The protein resides in the cytoplasm. The catalysed reaction is guanosine(37) in tRNA + S-adenosyl-L-methionine = N(1)-methylguanosine(37) in tRNA + S-adenosyl-L-homocysteine + H(+). In terms of biological role, specifically methylates guanosine-37 in various tRNAs. This is tRNA (guanine-N(1)-)-methyltransferase from Bordetella parapertussis (strain 12822 / ATCC BAA-587 / NCTC 13253).